The following is a 142-amino-acid chain: uncharacterized protein (142 aa).

Residues 1–9 (MDMVSPVLN) are Cytoplasmic-facing. A helical transmembrane segment spans residues 10 to 30 (LQSSILGELVGIIGKVFFLLI). Residues 31 to 41 (EEIKYPIITPK) lie on the Extracellular side of the membrane. A helical transmembrane segment spans residues 42 to 62 (IIVDAQISSWSLFFFASICNL). Residues 63-101 (SAKFREPIVTTSSIISLMESEKDLKNVNEYFQIMAKMLF) lie on the Cytoplasmic side of the membrane. Residues 102–122 (ILENKIVVSLFVVFNISVLII) traverse the membrane as a helical segment. Topologically, residues 123–142 (VKSEPYSYGKVLFKPSSSIF) are extracellular.

The protein localises to the membrane. This is an uncharacterized protein from Saccharomyces cerevisiae (strain ATCC 204508 / S288c) (Baker's yeast).